The chain runs to 2113 residues: Ninein (2113 aa).

EF-hand domains lie at 8 to 43 (QHEA…LCLE) and 42 to 77 (LEDV…ILSR). A Phosphoserine modification is found at serine 152. 2 EF-hand domains span residues 182-217 (WIEE…YGLQ) and 219-252 (VDGA…TGKS). A GTP-binding site is contributed by 245-252 (GLFKTGKS). Serine 269 carries the phosphoserine modification. 300–304 (DGMGQ) is a binding site for GTP. Residues 317-352 (EGIENSQEILKALDFSLDGNINLTELTLALENELLV) form the EF-hand 5 domain. Residues 358-570 (HQAALASFKA…YQAQGRVLRL (213 aa)) adopt a coiled-coil conformation. Position 420 to 423 (420 to 423 (RKLD)) interacts with GTP. Residues 578 to 599 (EELDGHSGGIEPDQGPGSEECN) are disordered. Coiled coils occupy residues 620-926 (RDLC…ESQH), 958-1008 (EQLA…STEI), 1175-1323 (EDTR…MEKV), and 1425-1806 (AALL…IDKD). Positions 798–1495 (EMETECNRRV…QDLQITCGEM (698 aa)) are important for interaction with CEP170. Residues serine 1540 and serine 1826 each carry the phosphoserine modification. Coiled coils occupy residues 1852 to 1910 (VQNT…KEQS) and 1971 to 2093 (REQF…IASL). Disordered stretches follow at residues 1899-1922 (KREC…MGSL) and 1988-2008 (SQHL…PQGN). The segment covering 1988 to 1999 (SQHLQEELENRT) has biased composition (basic and acidic residues).

Homooligomer. Interacts with GSK3B/GSK3-beta via its C-terminal domain. Interacts with C14ORF166, such interaction may prevent its phosphorylation by GSK3B. Interacts with AUNIP (via N-terminus). Identified in a complex with AUNIP and AURKA. Interacts with CCDC120. Interacts (via C-terminus) with CEP250. Interacts with CEP170. Interacts (via N-terminus) with the gamma-tubulin ring complex component TUBGCP3. Interacts with gamma-tubulin. Isoform 4 does not interact with CEP170 or CEP250. In terms of processing, phosphorylated by AURKA/Aurora kinase A and PKA kinases but not CK2 or AURKB/Aurora kinase B. Widely expressed. Highly expressed in spleen, bone marrow and skin. Weakly expressed in liver and small intestine. Expressed in brain.

The protein localises to the cytoplasm. The protein resides in the cytoskeleton. It localises to the microtubule organizing center. Its subcellular location is the centrosome. It is found in the centriole. In terms of biological role, centrosomal protein required for the positioning and anchorage of the microtubule minus-end in epithelial cells. May also act as a centrosome maturation factor. May play a role in microtubule nucleation, by recruiting the gamma-tubulin ring complex to the centrosome. Overexpression does not perturb nucleation or elongation of microtubules but suppresses release of microtubules. Required for centriole organization and microtubule anchoring at the mother centriole. In Mus musculus (Mouse), this protein is Ninein.